Here is a 468-residue protein sequence, read N- to C-terminus: Tissue alpha-L-fucosidase (468 aa).

An N-terminal signal peptide occupies residues 1-22 (MRSWVVGARLLLLLQLVLVLGA). Residue Thr173 is modified to Phosphothreonine. N-linked (GlcNAc...) asparagine glycans are attached at residues Asn244, Asn271, and Asn320.

This sequence belongs to the glycosyl hydrolase 29 family. In terms of assembly, homotetramer.

It localises to the lysosome. The catalysed reaction is an alpha-L-fucoside + H2O = L-fucose + an alcohol. The enzyme catalyses a neolactoside IV(2)-alpha-Fuc-nLc4Cer(d18:1(4E)) + H2O = a neolactoside nLc4Cer(d18:1(4E)) + L-fucose. It carries out the reaction a neolactoside IV(2)-alpha-Fuc-nLc4Cer(d18:0) + H2O = a neolactoside nLc4Cer(d18:0) + L-fucose. In terms of biological role, alpha-L-fucosidase is responsible for hydrolyzing the alpha-1,6-linked fucose joined to the reducing-end N-acetylglucosamine of the carbohydrate moieties of glycoproteins. In Bos taurus (Bovine), this protein is Tissue alpha-L-fucosidase (FUCA1).